A 305-amino-acid polypeptide reads, in one-letter code: Imidazoleglycerol-phosphate dehydratase (305 aa).

It belongs to the imidazoleglycerol-phosphate dehydratase family.

It localises to the cytoplasm. The enzyme catalyses D-erythro-1-(imidazol-4-yl)glycerol 3-phosphate = 3-(imidazol-4-yl)-2-oxopropyl phosphate + H2O. Its pathway is amino-acid biosynthesis; L-histidine biosynthesis; L-histidine from 5-phospho-alpha-D-ribose 1-diphosphate: step 6/9. The sequence is that of Imidazoleglycerol-phosphate dehydratase from Neisseria meningitidis serogroup C (strain 053442).